The following is a 261-amino-acid chain: Leucine-rich repeat-containing protein 18 (261 aa).

LRR repeat units follow at residues 28 to 49 (GKKRLDLSKMGITTFPKCILRL), 51 to 72 (DMDELDLSRNLIRKIPDSISKF), 74 to 95 (NLRWLDLHSNYIDKLPESIGQM), 97 to 118 (SLLYLNVSNNRLTSNGLPVELK), 122 to 144 (NIRAVNLGLNHLDSVPTTLGALK), 145 to 167 (ELHEVGLHDNLLNNIPVSISKLP), and 168 to 189 (KLKKLNIKRNPFPKPGESEIFI).

The protein localises to the cytoplasm. May be involved in the regulation of spermatogenesis and sperm maturation. The polypeptide is Leucine-rich repeat-containing protein 18 (LRRC18) (Homo sapiens (Human)).